Reading from the N-terminus, the 149-residue chain is MHCPFCFAVDTKVIDSRLVGEGSSVRRRRQCLVCNERFTTFEVAELVMPRVIKSNDVREPFNEDKLRSGMLRALEKRPVSADDVEMALNHIKSQLRATGEREVPSKMIGNLVMEQLKKLDKVAYIRFASVYRSFEDIKDFGEEIARLQD.

The segment at 3 to 34 is a zinc-finger region; sequence CPFCFAVDTKVIDSRLVGEGSSVRRRRQCLVC. In terms of domain architecture, ATP-cone spans 49–139; the sequence is PRVIKSNDVR…VYRSFEDIKD (91 aa).

The protein belongs to the NrdR family. It depends on Zn(2+) as a cofactor.

Functionally, negatively regulates transcription of bacterial ribonucleotide reductase nrd genes and operons by binding to NrdR-boxes. This is Transcriptional repressor NrdR from Salmonella schwarzengrund (strain CVM19633).